The chain runs to 712 residues: MKPEAHIEDIEFVPDRSLSLETGRIAKQADGSVVARLGDTMVLSTATLSDSVNESNFFPLTVDYREKFAAGGKVPGGFIKREGRPTDKETLTSRLIDRAIRPLFPDGFYHDVHVVNFVISAGQDFDADVIAGVGSSAALMLSGAPFAGPFAEVRVGRVDGDYIVNPTMQQTEESDIDLVVAGKEDALVMVEGEAEEISEESMIEALDVAHRSIRRLCEGQHRLVEQAGEPDPFEWEADRVPEQLVQRMREEYGPKVADHIHGPYSKETFHGGIGDLKDQAVDDVLGDASETPEGYTASDIRDAIGEVEKGEMRNMIVEEGKRIDGRDQTDVRDLWMEVGYLPRVHGSAIFTRGETQVLGSITLGTSDDVQPVDEVFADTDKSFYLHYRFPPFSVGEASYLRGPKRREIGHSMLAERALRPVIPEQDEFPYTIRINADVMESNGSSSMASVCAGSLALMDAGVPIEKPVAGIAMGLVQEDDETTVLTDILGQEDHLGDMDFKLTGTRDGITACQMDMKIEGLSRDVMLKALKQSRDARHHILDRMEETIAEPRAELSSHAPRLTKLTIDPDRIGAVIGPGGKVVKSVQEETNTEITVEEEEGVGIVTIAATNQRDAEAAIERIKQIVAVPEEGEDYVGTVKGIRDFGAFVEIMPEKTGLLHVSEIDYDYVENVEDYLEVGDKVKVHLLEVHDDGKMRLTRKPFVSEENGEQNE.

2 residues coordinate Mg(2+): Asp493 and Asp499. Positions 560 to 622 constitute a KH domain; sequence PRLTKLTIDP…RDAEAAIERI (63 aa). The region spanning 632–700 is the S1 motif domain; sequence GEDYVGTVKG…DDGKMRLTRK (69 aa).

It belongs to the polyribonucleotide nucleotidyltransferase family. Mg(2+) is required as a cofactor.

The protein resides in the cytoplasm. The enzyme catalyses RNA(n+1) + phosphate = RNA(n) + a ribonucleoside 5'-diphosphate. Functionally, involved in mRNA degradation. Catalyzes the phosphorolysis of single-stranded polyribonucleotides processively in the 3'- to 5'-direction. The polypeptide is Polyribonucleotide nucleotidyltransferase (Salinibacter ruber (strain DSM 13855 / M31)).